A 307-amino-acid polypeptide reads, in one-letter code: Putative flagellar export/assembly protein LafU (307 aa).

The helical transmembrane segment at 32–54 (AWKVAFADFTLAMMALFMTLWIV) threads the bilayer. Residues 87–108 (SPSHPPKPATVAAPEETEKKAR) are disordered. The OmpA-like domain maps to 154–272 (LRVLIKDDQN…RIEIMVLTKS (119 aa)).

Belongs to the MotB family.

The protein resides in the cell inner membrane. In terms of biological role, part of the flagellar gene cluster Flag-2. However, the Flag-2 flagellar system could be inactive in strain 042 due to a frameshift in lfgC. The sequence is that of Putative flagellar export/assembly protein LafU from Escherichia coli O44:H18 (strain 042 / EAEC).